A 320-amino-acid chain; its full sequence is SPX domain-containing protein 4 (320 aa).

One can recognise an SPX domain in the interval 1–170 (MKFGKDFRSH…GGLLSLPFTQ (170 aa)). Disordered stretches follow at residues 209-233 (SSSAKLQPQNDDAASHDPASSVDVE) and 275-320 (CSGA…PRDE). Over residues 278–289 (AITSESDSYSDS) the composition is skewed to polar residues. Residues 290 to 299 (QIEDAEDDDK) are compositionally biased toward acidic residues. Over residues 304-313 (REQNTAQNAA) the composition is skewed to polar residues.

As to quaternary structure, homodimer. Interacts (via N-terminus) with PHR2 (via C-terminus) in the presence of inositol polyphosphate. Interacts with BHLH6. Degraded under Pi starvation conditions through the ubiquitin/26S proteasome pathway. Widely expressed. Detected in root cells, with the exception of epidermis, and in mesophyll and vascular bundles in leaves.

The protein resides in the membrane. Its subcellular location is the nucleus. It localises to the cytoplasm. Inositol polyphosphate sensor that associates with transcription factors to regulate Pi starvation responses. The SPX domain provides a basic binding surface for inositol polyphosphate signaling molecules. Interacts with PHR2 to inhibit its translocation to the nucleus and repress its DNA-binding activity, and then negatively regulate Pi signaling. The sequence is that of SPX domain-containing protein 4 from Oryza sativa subsp. japonica (Rice).